The primary structure comprises 404 residues: Formate-dependent phosphoribosylglycinamide formyltransferase (404 aa).

N(1)-(5-phospho-beta-D-ribosyl)glycinamide-binding positions include 25-26 (EL) and glutamate 85. ATP contacts are provided by residues arginine 118, lysine 159, 164–169 (SSGKGQ), 199–202 (EGFV), and glutamate 207. The ATP-grasp domain occupies 123–318 (RLAAEELGLP…EFELHARAIL (196 aa)). Mg(2+) is bound by residues glutamate 277 and glutamate 289. N(1)-(5-phospho-beta-D-ribosyl)glycinamide is bound by residues aspartate 296, lysine 365, and 372 to 373 (RR).

This sequence belongs to the PurK/PurT family. Homodimer.

It catalyses the reaction N(1)-(5-phospho-beta-D-ribosyl)glycinamide + formate + ATP = N(2)-formyl-N(1)-(5-phospho-beta-D-ribosyl)glycinamide + ADP + phosphate + H(+). Its pathway is purine metabolism; IMP biosynthesis via de novo pathway; N(2)-formyl-N(1)-(5-phospho-D-ribosyl)glycinamide from N(1)-(5-phospho-D-ribosyl)glycinamide (formate route): step 1/1. Its function is as follows. Involved in the de novo purine biosynthesis. Catalyzes the transfer of formate to 5-phospho-ribosyl-glycinamide (GAR), producing 5-phospho-ribosyl-N-formylglycinamide (FGAR). Formate is provided by PurU via hydrolysis of 10-formyl-tetrahydrofolate. This is Formate-dependent phosphoribosylglycinamide formyltransferase from Burkholderia cenocepacia (strain HI2424).